Reading from the N-terminus, the 1368-residue chain is DNA-directed RNA polymerase subunit beta (1368 aa).

This sequence belongs to the RNA polymerase beta chain family. As to quaternary structure, the RNAP catalytic core consists of 2 alpha, 1 beta, 1 beta' and 1 omega subunit. When a sigma factor is associated with the core the holoenzyme is formed, which can initiate transcription.

The enzyme catalyses RNA(n) + a ribonucleoside 5'-triphosphate = RNA(n+1) + diphosphate. In terms of biological role, DNA-dependent RNA polymerase catalyzes the transcription of DNA into RNA using the four ribonucleoside triphosphates as substrates. The sequence is that of DNA-directed RNA polymerase subunit beta from Burkholderia thailandensis (strain ATCC 700388 / DSM 13276 / CCUG 48851 / CIP 106301 / E264).